A 212-amino-acid chain; its full sequence is MNDSSLSPEVTADLEYGLDILELDRVYVVPLLAYLTLLIRWNRTYNLTAIRDPREMVVRHLLDSLAIQRYVTVGRLADLGSGPGLPGIPLAISCPSLQVTLVESNGKKARFLREVVRQLGLSNVGVSEVRAEALDEALTYEHLTARALDTLNGIVTVGGHLLKSEGTLLAMKGAYPHEEIAMLPPHWVVEAVHPLQVPKLTGKRHLVIVRKR.

Residues G80, L85, 131-132 (AE), and R146 each bind S-adenosyl-L-methionine.

This sequence belongs to the methyltransferase superfamily. RNA methyltransferase RsmG family.

The protein resides in the cytoplasm. The catalysed reaction is guanosine(527) in 16S rRNA + S-adenosyl-L-methionine = N(7)-methylguanosine(527) in 16S rRNA + S-adenosyl-L-homocysteine. Functionally, specifically methylates the N7 position of guanine in position 527 of 16S rRNA. The chain is Ribosomal RNA small subunit methyltransferase G from Xylella fastidiosa (strain 9a5c).